Consider the following 574-residue polypeptide: DNA mismatch repair protein MutL (574 aa).

It belongs to the DNA mismatch repair MutL/HexB family.

Its function is as follows. This protein is involved in the repair of mismatches in DNA. It is required for dam-dependent methyl-directed DNA mismatch repair. May act as a 'molecular matchmaker', a protein that promotes the formation of a stable complex between two or more DNA-binding proteins in an ATP-dependent manner without itself being part of a final effector complex. This Coxiella burnetii (strain Dugway 5J108-111) protein is DNA mismatch repair protein MutL.